We begin with the raw amino-acid sequence, 75 residues long: Brevinin-2SN2 (75 aa).

A signal peptide spans 1 to 22 (MFTLKKPLLFLFFLGTISLSFC). The propeptide at 23-40 (EEERGADEDDGGEMTEEE) is removed in mature form. Residues Cys-69 and Cys-75 are joined by a disulfide bond.

Belongs to the frog skin active peptide (FSAP) family. Brevinin subfamily. In terms of tissue distribution, expressed by the skin glands.

It localises to the secreted. Functionally, antimicrobial peptide. Active against some Gram-negative and a variety of Gram-positive bacterial strains. Active against fungus C.glabrata 090902 but not against C.albicans ATCC 10231. Shows hemolytic activity against human erythrocytes. This chain is Brevinin-2SN2, found in Sylvirana spinulosa (Fine-spined frog).